The sequence spans 695 residues: Elongation factor G 1 (695 aa).

Residues 6–284 enclose the tr-type G domain; it reads SKVRNIGISA…AVETYLPCPT (279 aa). Residues 15-22, 82-86, and 136-139 contribute to the GTP site; these read AHIDSGKT, DTPGH, and NKCD.

It belongs to the TRAFAC class translation factor GTPase superfamily. Classic translation factor GTPase family. EF-G/EF-2 subfamily.

It is found in the cytoplasm. Its function is as follows. Catalyzes the GTP-dependent ribosomal translocation step during translation elongation. During this step, the ribosome changes from the pre-translocational (PRE) to the post-translocational (POST) state as the newly formed A-site-bound peptidyl-tRNA and P-site-bound deacylated tRNA move to the P and E sites, respectively. Catalyzes the coordinated movement of the two tRNA molecules, the mRNA and conformational changes in the ribosome. The protein is Elongation factor G 1 of Desulfotalea psychrophila (strain LSv54 / DSM 12343).